Reading from the N-terminus, the 385-residue chain is Queuine tRNA-ribosyltransferase (385 aa).

The active-site Proton acceptor is Asp93. Substrate contacts are provided by residues Asp93 to Phe97, Asp147, Gln191, and Gly218. An RNA binding region spans residues Gly249 to Asp255. Asp268 acts as the Nucleophile in catalysis. Positions Thr273–Arg277 are RNA binding; important for wobble base 34 recognition. Zn(2+) contacts are provided by Cys306, Cys308, Cys311, and His337.

This sequence belongs to the queuine tRNA-ribosyltransferase family. As to quaternary structure, homodimer. Within each dimer, one monomer is responsible for RNA recognition and catalysis, while the other monomer binds to the replacement base PreQ1. The cofactor is Zn(2+).

It catalyses the reaction 7-aminomethyl-7-carbaguanine + guanosine(34) in tRNA = 7-aminomethyl-7-carbaguanosine(34) in tRNA + guanine. Its pathway is tRNA modification; tRNA-queuosine biosynthesis. Its function is as follows. Catalyzes the base-exchange of a guanine (G) residue with the queuine precursor 7-aminomethyl-7-deazaguanine (PreQ1) at position 34 (anticodon wobble position) in tRNAs with GU(N) anticodons (tRNA-Asp, -Asn, -His and -Tyr). Catalysis occurs through a double-displacement mechanism. The nucleophile active site attacks the C1' of nucleotide 34 to detach the guanine base from the RNA, forming a covalent enzyme-RNA intermediate. The proton acceptor active site deprotonates the incoming PreQ1, allowing a nucleophilic attack on the C1' of the ribose to form the product. After dissociation, two additional enzymatic reactions on the tRNA convert PreQ1 to queuine (Q), resulting in the hypermodified nucleoside queuosine (7-(((4,5-cis-dihydroxy-2-cyclopenten-1-yl)amino)methyl)-7-deazaguanosine). This Pasteurella multocida (strain Pm70) protein is Queuine tRNA-ribosyltransferase.